The following is a 731-amino-acid chain: Endopolyphosphatase (731 aa).

Residues 1–4 (MSLS) lie on the Cytoplasmic side of the membrane. The helical; Signal-anchor for type II membrane protein transmembrane segment at 5-25 (RCILGLACLWHGVIASPLGAV) threads the bilayer. Residues 26–731 (PSNIPIATDL…VEKEDLKKFT (706 aa)) lie on the Vacuolar side of the membrane. Asparagine 106 carries an N-linked (GlcNAc...) asparagine glycan. The interval 375–403 (KLQPPPTDSKNSGQLKKGKKGRKGKKKKP) is disordered. Residues 390-402 (KKGKKGRKGKKKK) show a composition bias toward basic residues. Asparagine 433 carries N-linked (GlcNAc...) asparagine glycosylation. The tract at residues 456–522 (EQNDRQKHLD…PPGPAYSPQP (67 aa)) is disordered. Basic and acidic residues-rich tracts occupy residues 457-474 (QNDR…PSHM) and 492-501 (GGDSKPKKPD). The span at 505–519 (PHPPAKSSPPGPAYS) shows a compositional bias: pro residues. N-linked (GlcNAc...) asparagine glycans are attached at residues asparagine 534 and asparagine 540. Positions 626 to 706 (AKSIDVSYES…HKKKKGKKRQ (81 aa)) are disordered. Acidic residues predominate over residues 636–686 (AAEEEEEEEEEEEEDLFEEVEETDEEEEQEDDDLSDGEEVDDDSDEDELET). Residues 691–706 (KHDKKKHKKKKGKKRQ) are compositionally biased toward basic residues.

Belongs to the endopolyphosphatase PPN1 family. It depends on a divalent metal cation as a cofactor. Processing by proteases in the vacuole may be required for activation.

It localises to the vacuole membrane. It catalyses the reaction [phosphate](n+1) + n H2O = (n+1) phosphate + n H(+). Catalyzes the hydrolysis of inorganic polyphosphate (polyP) chains of many hundreds of phosphate residues into shorter lengths. The polypeptide is Endopolyphosphatase (epp-1) (Neurospora crassa (strain ATCC 24698 / 74-OR23-1A / CBS 708.71 / DSM 1257 / FGSC 987)).